We begin with the raw amino-acid sequence, 250 residues long: Triosephosphate isomerase, glycosomal (250 aa).

The substrate site is built by Asn-11 and Lys-13. The Electrophile role is filled by His-95. The Proton acceptor role is filled by Glu-167.

The protein belongs to the triosephosphate isomerase family. In terms of assembly, homodimer.

Its subcellular location is the glycosome. It catalyses the reaction D-glyceraldehyde 3-phosphate = dihydroxyacetone phosphate. Its pathway is carbohydrate biosynthesis; gluconeogenesis. The protein operates within carbohydrate degradation; glycolysis; D-glyceraldehyde 3-phosphate from glycerone phosphate: step 1/1. The sequence is that of Triosephosphate isomerase, glycosomal from Trypanosoma brucei brucei.